Consider the following 274-residue polypeptide: 4-diphosphocytidyl-2-C-methyl-D-erythritol kinase (274 aa).

Residue lysine 14 is part of the active site. Residue 94–104 coordinates ATP; it reads PMQAGLGGGSS. The active site involves aspartate 134.

This sequence belongs to the GHMP kinase family. IspE subfamily.

The catalysed reaction is 4-CDP-2-C-methyl-D-erythritol + ATP = 4-CDP-2-C-methyl-D-erythritol 2-phosphate + ADP + H(+). Its pathway is isoprenoid biosynthesis; isopentenyl diphosphate biosynthesis via DXP pathway; isopentenyl diphosphate from 1-deoxy-D-xylulose 5-phosphate: step 3/6. Its function is as follows. Catalyzes the phosphorylation of the position 2 hydroxy group of 4-diphosphocytidyl-2C-methyl-D-erythritol. This Thermosipho melanesiensis (strain DSM 12029 / CIP 104789 / BI429) protein is 4-diphosphocytidyl-2-C-methyl-D-erythritol kinase.